A 71-amino-acid polypeptide reads, in one-letter code: ATP synthase subunit c (71 aa).

The next 2 helical transmembrane spans lie at 4–24 and 47–67; these read IAAAIAIMGAAIGAGYGNGQV and FIGVALVEAVPILGVVIALIL.

This sequence belongs to the ATPase C chain family. In terms of assembly, F-type ATPases have 2 components, F(1) - the catalytic core - and F(0) - the membrane proton channel. F(1) has five subunits: alpha(3), beta(3), gamma(1), delta(1), epsilon(1). F(0) has three main subunits: a(1), b(2) and c(10-14). The alpha and beta chains form an alternating ring which encloses part of the gamma chain. F(1) is attached to F(0) by a central stalk formed by the gamma and epsilon chains, while a peripheral stalk is formed by the delta and b chains.

The protein resides in the cell membrane. F(1)F(0) ATP synthase produces ATP from ADP in the presence of a proton or sodium gradient. F-type ATPases consist of two structural domains, F(1) containing the extramembraneous catalytic core and F(0) containing the membrane proton channel, linked together by a central stalk and a peripheral stalk. During catalysis, ATP synthesis in the catalytic domain of F(1) is coupled via a rotary mechanism of the central stalk subunits to proton translocation. In terms of biological role, key component of the F(0) channel; it plays a direct role in translocation across the membrane. A homomeric c-ring of between 10-14 subunits forms the central stalk rotor element with the F(1) delta and epsilon subunits. The chain is ATP synthase subunit c from Enterococcus hirae (strain ATCC 9790 / DSM 20160 / JCM 8729 / LMG 6399 / NBRC 3181 / NCIMB 6459 / NCDO 1258 / NCTC 12367 / WDCM 00089 / R).